A 414-amino-acid chain; its full sequence is 5-aminolevulinate synthase (414 aa).

Residues arginine 22, serine 133, and lysine 152 each contribute to the substrate site. 3 residues coordinate pyridoxal 5'-phosphate: serine 185, histidine 213, and threonine 241. Lysine 244 is an active-site residue. Lysine 244 carries the N6-(pyridoxal phosphate)lysine modification. Pyridoxal 5'-phosphate-binding residues include threonine 273 and threonine 274. Threonine 359 serves as a coordination point for substrate.

The protein belongs to the class-II pyridoxal-phosphate-dependent aminotransferase family. Homodimer. It depends on pyridoxal 5'-phosphate as a cofactor.

The catalysed reaction is succinyl-CoA + glycine + H(+) = 5-aminolevulinate + CO2 + CoA. It functions in the pathway porphyrin-containing compound metabolism; protoporphyrin-IX biosynthesis; 5-aminolevulinate from glycine: step 1/1. This Rickettsia prowazekii (strain Madrid E) protein is 5-aminolevulinate synthase (hemA).